The chain runs to 534 residues: 5'-nucleotidase domain-containing protein 3 (534 aa).

The active-site Nucleophile is the Asp104. Residues Asp104 and Asp106 each contribute to the Mg(2+) site. Asp106 serves as the catalytic Proton donor. 234–242 (KEAIRDVHV) lines the substrate pocket. Asp372 contributes to the Mg(2+) binding site.

Belongs to the 5'(3')-deoxyribonucleotidase family. Mg(2+) serves as cofactor.

This chain is 5'-nucleotidase domain-containing protein 3 (nt5dc3), found in Xenopus tropicalis (Western clawed frog).